The chain runs to 249 residues: Polyhedrin (249 aa).

It belongs to the polyhedrin family.

Major component of the virus occlusion bodies, which are large proteinaceous structures (polyhedra), that protect the virus from the outside environment for extended periods until they are ingested by insect larvae. This is Polyhedrin (PH) from Lepidoptera (butterflies and moths).